A 692-amino-acid polypeptide reads, in one-letter code: Protein arginine N-methyltransferase 7 (692 aa).

SAM-dependent MTase PRMT-type domains lie at 14-345 and 358-684; these read SVEW…YCVW and RVRQ…IIME. Arg32 bears the Omega-N-methylarginine mark. Active-site residues include Glu144 and Glu153.

It belongs to the class I-like SAM-binding methyltransferase superfamily. Protein arginine N-methyltransferase family. PRMT7 subfamily. As to quaternary structure, homodimer and heterodimer. Interacts with CTCFL. Interacts with PRMT5 and SNRPD3.

It is found in the cytoplasm. It localises to the cytosol. Its subcellular location is the nucleus. It carries out the reaction L-arginyl-[protein] + S-adenosyl-L-methionine = N(omega)-methyl-L-arginyl-[protein] + S-adenosyl-L-homocysteine + H(+). Functionally, arginine methyltransferase that can both catalyze the formation of omega-N monomethylarginine (MMA) and symmetrical dimethylarginine (sDMA), with a preference for the formation of MMA. Specifically mediates the symmetrical dimethylation of arginine residues in the small nuclear ribonucleoproteins Sm D1 (SNRPD1) and Sm D3 (SNRPD3); such methylation being required for the assembly and biogenesis of snRNP core particles. Specifically mediates the symmetric dimethylation of histone H4 'Arg-3' to form H4R3me2s. Plays a role in gene imprinting by being recruited by CTCFL at the H19 imprinted control region (ICR) and methylating histone H4 to form H4R3me2s, possibly leading to recruit DNA methyltransferases at these sites. May also play a role in embryonic stem cell (ESC) pluripotency. Also able to mediate the arginine methylation of histone H2A and myelin basic protein (MBP) in vitro; the relevance of such results is however unclear in vivo. The sequence is that of Protein arginine N-methyltransferase 7 (PRMT7) from Homo sapiens (Human).